Here is a 441-residue protein sequence, read N- to C-terminus: Xaa-Pro dipeptidase (441 aa).

Mn(2+) contacts are provided by Asp244, Asp255, His336, Glu381, and Glu420.

Belongs to the peptidase M24B family. Bacterial-type prolidase subfamily. Mn(2+) is required as a cofactor.

The enzyme catalyses Xaa-L-Pro dipeptide + H2O = an L-alpha-amino acid + L-proline. Splits dipeptides with a prolyl residue in the C-terminal position. The protein is Xaa-Pro dipeptidase of Xanthomonas campestris pv. campestris (strain B100).